Reading from the N-terminus, the 631-residue chain is Phosphomethylpyrimidine synthase (631 aa).

Residues asparagine 239, methionine 268, tyrosine 297, histidine 333, 353 to 355 (SRG), 394 to 397 (DGLR), and glutamate 433 contribute to the substrate site. Histidine 437 contacts Zn(2+). Tyrosine 460 is a binding site for substrate. Histidine 501 lines the Zn(2+) pocket. [4Fe-4S] cluster-binding residues include cysteine 581, cysteine 584, and cysteine 589.

Belongs to the ThiC family. As to quaternary structure, homodimer. [4Fe-4S] cluster is required as a cofactor.

It carries out the reaction 5-amino-1-(5-phospho-beta-D-ribosyl)imidazole + S-adenosyl-L-methionine = 4-amino-2-methyl-5-(phosphooxymethyl)pyrimidine + CO + 5'-deoxyadenosine + formate + L-methionine + 3 H(+). It participates in cofactor biosynthesis; thiamine diphosphate biosynthesis. Its function is as follows. Catalyzes the synthesis of the hydroxymethylpyrimidine phosphate (HMP-P) moiety of thiamine from aminoimidazole ribotide (AIR) in a radical S-adenosyl-L-methionine (SAM)-dependent reaction. In Salmonella paratyphi A (strain AKU_12601), this protein is Phosphomethylpyrimidine synthase.